The primary structure comprises 185 residues: Ribosome-recycling factor (185 aa).

This sequence belongs to the RRF family.

It is found in the cytoplasm. Its function is as follows. Responsible for the release of ribosomes from messenger RNA at the termination of protein biosynthesis. May increase the efficiency of translation by recycling ribosomes from one round of translation to another. The polypeptide is Ribosome-recycling factor (Alkalilimnicola ehrlichii (strain ATCC BAA-1101 / DSM 17681 / MLHE-1)).